The primary structure comprises 252 residues: Urease accessory protein UreD (252 aa).

Belongs to the UreD family. In terms of assembly, ureD, UreF and UreG form a complex that acts as a GTP-hydrolysis-dependent molecular chaperone, activating the urease apoprotein by helping to assemble the nickel containing metallocenter of UreC. The UreE protein probably delivers the nickel.

The protein localises to the cytoplasm. In terms of biological role, required for maturation of urease via the functional incorporation of the urease nickel metallocenter. This is Urease accessory protein UreD from Streptomyces avermitilis (strain ATCC 31267 / DSM 46492 / JCM 5070 / NBRC 14893 / NCIMB 12804 / NRRL 8165 / MA-4680).